We begin with the raw amino-acid sequence, 393 residues long: Lysophosphatidic acid receptor 1 (393 aa).

Over 1–50 the chain is Extracellular; the sequence is MAAASTSSPVVSQPQFTAMNEPQCFYNESIAFFYNRSGKYLATEWNTVSK. 2 disulfide bridges follow: C24/C190 and C188/C195. 2 N-linked (GlcNAc...) asparagine glycosylation sites follow: N27 and N35. K39 is an a 1-acyl-sn-glycero-3-phosphate binding site. A helical membrane pass occupies residues 51–75; that stretch reads LVMGLGITVCIFIMLANLLVMVAIY. The Cytoplasmic portion of the chain corresponds to 76-83; the sequence is VNRRFHFP. A helical membrane pass occupies residues 84–107; it reads IYYLMANLAAADFFAGLAYFYLMF. The Extracellular segment spans residues 108–121; sequence NTGPNTRRLTVSTW. Residues 122–144 traverse the membrane as a helical segment; it reads LLRQGLIDTTVTASVANLLAIAI. Residue 124–129 participates in a 1-acyl-sn-glycero-3-phosphate binding; that stretch reads RQGLID. The Cytoplasmic segment spans residues 145–163; that stretch reads ERHITVFRMQLHTRMSNRR. Residues 164-184 traverse the membrane as a helical segment; sequence VVVVIVVIWTMAIVMGAIPSV. At 185–204 the chain is on the extracellular side; sequence GWNCICDIENCSNMAPLYSD. A helical membrane pass occupies residues 205–225; sequence SYLVFWAIFNLVTFVVMVVLY. W210 serves as a coordination point for a 1-acyl-sn-glycero-3-phosphate. The Cytoplasmic portion of the chain corresponds to 226–255; it reads AHIFGYVRQRTMRMSRHSSGPRRNRDTMMS. A helical transmembrane segment spans residues 256–280; the sequence is LLKTVVIVLGAFIICWTPGLVLLLL. Topologically, residues 281-294 are extracellular; it reads DVCCPQCDVLAYEK. The cysteines at positions 284 and 287 are disulfide-linked. The chain crosses the membrane as a helical span at residues 295–315; it reads FFLLLAEFNSAMNPIIYSYRD. Residues 316–393 lie on the Cytoplasmic side of the membrane; that stretch reads KEMSATFRQI…PPERPGQGRV (78 aa). Residue S341 is modified to Phosphoserine. T351 carries the post-translational modification Phosphothreonine. The span at 369-381 shows a compositional bias: basic and acidic residues; sequence KMRGGHHLLRDEQ. Residues 369–393 form a disordered region; it reads KMRGGHHLLRDEQPPPPERPGQGRV.

This sequence belongs to the G-protein coupled receptor 1 family. In terms of assembly, interacts with RALA and GRK2. Interacts with GNAQ and GNA13. Interacts with CD14; the interaction is enhanced by exposure to bacterial lipopolysaccharide (LPS). In terms of processing, N-glycosylated. Detected in brain cortex and in pituitary pars tuberalis.

Its subcellular location is the cell surface. The protein resides in the cell membrane. It localises to the endosome. Its function is as follows. Receptor for lysophosphatidic acid (LPA). Plays a role in the reorganization of the actin cytoskeleton, cell migration, differentiation and proliferation, and thereby contributes to the responses to tissue damage and infectious agents. Activates downstream signaling cascades via the G(i)/G(o), G(12)/G(13), and G(q) families of heteromeric G proteins. Signaling inhibits adenylyl cyclase activity and decreases cellular cAMP levels. Signaling triggers an increase of cytoplasmic Ca(2+) levels. Activates RALA; this leads to the activation of phospholipase C (PLC) and the formation of inositol 1,4,5-trisphosphate. Signaling mediates activation of down-stream MAP kinases. Contributes to the regulation of cell shape. Promotes Rho-dependent reorganization of the actin cytoskeleton in neuronal cells and neurite retraction. Promotes the activation of Rho and the formation of actin stress fibers. Promotes formation of lamellipodia at the leading edge of migrating cells via activation of RAC1. Through its function as LPA receptor, plays a role in chemotaxis and cell migration, including responses to injury and wounding. Plays a role in triggering inflammation in response to bacterial lipopolysaccharide (LPS) via its interaction with CD14. Promotes cell proliferation in response to LPA. Inhibits the intracellular ciliogenesis pathway in response to LPA and through AKT1 activation. Required for normal skeleton development. May play a role in osteoblast differentiation. Required for normal brain development. Required for normal proliferation, survival and maturation of newly formed neurons in the adult dentate gyrus. Plays a role in pain perception and in the initiation of neuropathic pain. The chain is Lysophosphatidic acid receptor 1 (LPAR1) from Ovis aries (Sheep).